A 479-amino-acid chain; its full sequence is Signal recognition particle subunit SRP54 1 (479 aa).

The G-domain stretch occupies residues 1-295 (MVLAELGGRI…DVKPFVSRLL (295 aa)). GTP contacts are provided by residues 108–115 (GLQGAGKT), 190–194 (DTSGR), and 248–251 (TKMD). An M-domain region spans residues 296 to 479 (GKGDWSGLVD…MMGMFGGGGK (184 aa)).

The protein belongs to the GTP-binding SRP family. SRP54 subfamily. In terms of assembly, component of a signal recognition particle (SRP) complex that consists of a 7SL RNA molecule of 300 nucleotides and six protein subunits: SRP72, SRP68, SRP54, SRP19, SRP14 and SRP9.

The protein resides in the cytoplasm. Its subcellular location is the endoplasmic reticulum. It carries out the reaction GTP + H2O = GDP + phosphate + H(+). Functionally, component of the signal recognition particle (SRP) complex, a ribonucleoprotein complex that mediates the cotranslational targeting of secretory and membrane proteins to the endoplasmic reticulum (ER). As part of the SRP complex, associates with the SRP receptor (SR) component SRPRA to target secretory proteins to the endoplasmic reticulum membrane. Binds to the signal sequence of presecretory proteins when they emerge from the ribosomes. Displays basal GTPase activity, and stimulates reciprocal GTPase activation of the SR subunit SRPRA. Forms a guanosine 5'-triphosphate (GTP)-dependent complex with the SR subunit SRPRA. SR compaction and GTPase mediated rearrangement of SR drive SRP-mediated cotranslational protein translocation into the ER. Requires the presence of SRP9/SRP14 and/or SRP19 to stably interact with RNA. This Arabidopsis thaliana (Mouse-ear cress) protein is Signal recognition particle subunit SRP54 1 (SRP-54A).